The following is a 331-amino-acid chain: Glyceraldehyde-3-phosphate dehydrogenase 2 (331 aa).

NAD(+)-binding positions include 11–12 (RI), Asp-33, and Arg-78. D-glyceraldehyde 3-phosphate is bound by residues 148 to 150 (SCT), Thr-179, 208 to 209 (TG), and Arg-231. Cys-149 acts as the Nucleophile in catalysis. Asn-313 lines the NAD(+) pocket.

Belongs to the glyceraldehyde-3-phosphate dehydrogenase family. As to quaternary structure, homotetramer.

It is found in the cytoplasm. It catalyses the reaction D-glyceraldehyde 3-phosphate + phosphate + NAD(+) = (2R)-3-phospho-glyceroyl phosphate + NADH + H(+). The protein operates within carbohydrate degradation; glycolysis; pyruvate from D-glyceraldehyde 3-phosphate: step 1/5. The chain is Glyceraldehyde-3-phosphate dehydrogenase 2 (GAP2) from Kluyveromyces marxianus (Yeast).